We begin with the raw amino-acid sequence, 139 residues long: Insulin-like growth factor (139 aa).

Positions 1-38 (YIRRVRQGSIYSLLVESQQWCKLTLTLLLLLALLTRCT) are cleaved as a signal peptide. The segment at 39–67 (LSETLCGSELVDTLQFVCDDRGFFFVPQH) is b. Positions 68–82 (VPPRRGAHRRSRARK) are c. Residues 83–103 (GIVEECCFKGCSLRLLEMYCA) form an a region. A d region spans residues 104–113 (RPSKAERDVA). Positions 108–139 (AERDVARPRQRPHRASQHSRRGSQSRGRGRSR) are disordered. The tract at residues 114–139 (RPRQRPHRASQHSRRGSQSRGRGRSR) is e. Over residues 115-139 (PRQRPHRASQHSRRGSQSRGRGRSR) the composition is skewed to basic residues.

Belongs to the insulin family.

The protein resides in the secreted. Functionally, the insulin-like growth factors, isolated from plasma, are structurally and functionally related to insulin but have a much higher growth-promoting activity. The chain is Insulin-like growth factor from Myxine glutinosa (Atlantic hagfish).